Consider the following 409-residue polypeptide: Tetracenomycin polyketide synthase ketoacyl synthase beta subunit (409 aa).

A Ketosynthase family 3 (KS3) domain is found at 4 to 407 (PAPVVVTGLG…GFNSALVVRR (404 aa)).

The protein belongs to the thiolase-like superfamily. Beta-ketoacyl-ACP synthases family. The tetracenomycin polyketide synthase (TCM PKS) is composed of a ketosynthase complex (TcmKL), an acyl carrier protein (TcmM), a cyclase (TcmN) and a probable second cyclase (TcmJ). TcmK and TcmL form a heterodimeric complex.

The catalysed reaction is 10 malonyl-CoA + 8 H(+) = tetracenomycin F2 + 10 CO2 + 10 CoA + 2 H2O. The protein operates within antibiotic biosynthesis; tetracenomycin C biosynthesis. In terms of biological role, involved in the biosynthesis of tetracenomycin C (TCM C). Part of a type II polyketide synthase (PKS) that catalyzes the synthesis of tetracenomycin F2 (TCM F2), a precursor of TCM C, from malonyl-CoA. TcmK and TcmL form a heterodimeric alpha-beta complex that catalyzes the condensation reactions between the growing acyl-enzyme chain and the malonyl-CoA extender units. This Streptomyces glaucescens protein is Tetracenomycin polyketide synthase ketoacyl synthase beta subunit.